Consider the following 136-residue polypeptide: Succinate dehydrogenase 2 membrane subunit SdhC (136 aa).

3 consecutive transmembrane segments (helical) span residues 32–52 (RISG…AAML), 70–90 (IVGL…LNGI), and 109–129 (LWII…VVGI). Position 85 (His85) interacts with heme.

It belongs to the cytochrome b560 family. Part of an enzyme complex containing four subunits: a flavoprotein (SdhA), an iron-sulfur protein (SdhB), plus two membrane-anchoring proteins (SdhC and SdhD). Heme serves as cofactor.

The protein localises to the cell membrane. Functionally, membrane-anchoring subunit of succinate dehydrogenase 2 (Sdh2). Sdh2 may catalyze the two-electron oxidation of succinate to fumarate with a corresponding reduction of quinone to quinol under low oxygen conditions, when the primary aerobic succinate dehydrogenase (Sdh1) is inhibited. Sdh2 seems to be the generator of the proton motive force (PMF) under hypoxia. This chain is Succinate dehydrogenase 2 membrane subunit SdhC, found in Mycobacterium tuberculosis (strain ATCC 25618 / H37Rv).